A 223-amino-acid polypeptide reads, in one-letter code: Phosphoribosylformylglycinamidine synthase subunit PurQ (223 aa).

Residues Lys-2 to Ala-223 form the Glutamine amidotransferase type-1 domain. The Nucleophile role is filled by Cys-86. Catalysis depends on residues His-195 and Glu-197.

As to quaternary structure, part of the FGAM synthase complex composed of 1 PurL, 1 PurQ and 2 PurS subunits.

Its subcellular location is the cytoplasm. It carries out the reaction N(2)-formyl-N(1)-(5-phospho-beta-D-ribosyl)glycinamide + L-glutamine + ATP + H2O = 2-formamido-N(1)-(5-O-phospho-beta-D-ribosyl)acetamidine + L-glutamate + ADP + phosphate + H(+). The enzyme catalyses L-glutamine + H2O = L-glutamate + NH4(+). Its pathway is purine metabolism; IMP biosynthesis via de novo pathway; 5-amino-1-(5-phospho-D-ribosyl)imidazole from N(2)-formyl-N(1)-(5-phospho-D-ribosyl)glycinamide: step 1/2. Its function is as follows. Part of the phosphoribosylformylglycinamidine synthase complex involved in the purines biosynthetic pathway. Catalyzes the ATP-dependent conversion of formylglycinamide ribonucleotide (FGAR) and glutamine to yield formylglycinamidine ribonucleotide (FGAM) and glutamate. The FGAM synthase complex is composed of three subunits. PurQ produces an ammonia molecule by converting glutamine to glutamate. PurL transfers the ammonia molecule to FGAR to form FGAM in an ATP-dependent manner. PurS interacts with PurQ and PurL and is thought to assist in the transfer of the ammonia molecule from PurQ to PurL. The protein is Phosphoribosylformylglycinamidine synthase subunit PurQ of Lactobacillus acidophilus (strain ATCC 700396 / NCK56 / N2 / NCFM).